A 188-amino-acid chain; its full sequence is Elongation factor P (188 aa).

The protein belongs to the elongation factor P family.

The protein resides in the cytoplasm. It functions in the pathway protein biosynthesis; polypeptide chain elongation. Involved in peptide bond synthesis. Stimulates efficient translation and peptide-bond synthesis on native or reconstituted 70S ribosomes in vitro. Probably functions indirectly by altering the affinity of the ribosome for aminoacyl-tRNA, thus increasing their reactivity as acceptors for peptidyl transferase. The chain is Elongation factor P from Bacteroides thetaiotaomicron (strain ATCC 29148 / DSM 2079 / JCM 5827 / CCUG 10774 / NCTC 10582 / VPI-5482 / E50).